The chain runs to 362 residues: Peptide chain release factor 1 (362 aa).

The residue at position 235 (Gln235) is an N5-methylglutamine.

This sequence belongs to the prokaryotic/mitochondrial release factor family. Post-translationally, methylated by PrmC. Methylation increases the termination efficiency of RF1.

It localises to the cytoplasm. Its function is as follows. Peptide chain release factor 1 directs the termination of translation in response to the peptide chain termination codons UAG and UAA. The chain is Peptide chain release factor 1 from Acinetobacter baumannii (strain ACICU).